A 377-amino-acid polypeptide reads, in one-letter code: DNA replication and repair protein RecF (377 aa).

30–37 (GPNGVGKT) is a binding site for ATP.

The protein belongs to the RecF family.

It is found in the cytoplasm. In terms of biological role, the RecF protein is involved in DNA metabolism; it is required for DNA replication and normal SOS inducibility. RecF binds preferentially to single-stranded, linear DNA. It also seems to bind ATP. The chain is DNA replication and repair protein RecF from Salinispora tropica (strain ATCC BAA-916 / DSM 44818 / JCM 13857 / NBRC 105044 / CNB-440).